The primary structure comprises 600 residues: Aspartate--tRNA(Asp/Asn) ligase (600 aa).

L-aspartate is bound at residue Glu-187. Positions 211–214 (QIFK) are aspartate. L-aspartate is bound by residues Arg-233 and His-463. 233–235 (RDE) is an ATP binding site. An ATP-binding site is contributed by Glu-497. L-aspartate is bound at residue Arg-504. An ATP-binding site is contributed by 549–552 (GVDR).

It belongs to the class-II aminoacyl-tRNA synthetase family. Type 1 subfamily. In terms of assembly, homodimer.

The protein resides in the cytoplasm. The enzyme catalyses tRNA(Asx) + L-aspartate + ATP = L-aspartyl-tRNA(Asx) + AMP + diphosphate. Its function is as follows. Aspartyl-tRNA synthetase with relaxed tRNA specificity since it is able to aspartylate not only its cognate tRNA(Asp) but also tRNA(Asn). Reaction proceeds in two steps: L-aspartate is first activated by ATP to form Asp-AMP and then transferred to the acceptor end of tRNA(Asp/Asn). The protein is Aspartate--tRNA(Asp/Asn) ligase of Wolbachia pipientis wMel.